The primary structure comprises 609 residues: Membrane-bound O-acyltransferase GUP2 (609 aa).

A signal peptide spans 1–18 (MSMLRIWSCIVHFFSVQA). Residues 19–75 (LDSRIKPDIEFKRRQRIFINSSKEENGSSSSAVTVTRNPVLSSNSPSPPLWNTWEFR) are Lumenal-facing. Residues 76-96 (LYYLAFTVVVPFMIKAALATS) traverse the membrane as a helical segment. The Cytoplasmic segment spans residues 97 to 133 (SESNPNYYKFSGLLAHGWILGRKVDNSDPQYRFFRSN). The helical transmembrane segment at 134–154 (FFLLAILILLQIILKKVFVKF) threads the bilayer. The Lumenal segment spans residues 155-169 (SKIPKTKFDFACGLV). The helical transmembrane segment at 170–190 (FVCFMYGINSVKLFTHAFIFF) threads the bilayer. The Cytoplasmic portion of the chain corresponds to 191–200 (TLAHSLKRKR). Residues 201 to 221 (LIAAFAIWSYGIFTLFINQKM) traverse the membrane as a helical segment. Over 222 to 324 (KNLPFNNIAI…VAEHHIQDYN (103 aa)) the chain is Lumenal. The chain crosses the membrane as a helical span at residues 325 to 345 (FINFIAYITYAPLFLVGPIIT). Residues 346–371 (FNDYLYQSENKLPSLTKKNIGFYALK) lie on the Cytoplasmic side of the membrane. The chain crosses the membrane as a helical span at residues 372–392 (VFSSLLLMEIILHYIYVGAIA). Residues 393–406 (RTKAWNNDTPLQQA) lie on the Lumenal side of the membrane. A helical transmembrane segment spans residues 407–427 (MIALFNLNIMYLKLLIPWRLF). Residues 428–474 (RLWAMVDGIDAPENMLRCVDNNYSTVGFWRAWHTSFNKWVIRYIYVP) are Cytoplasmic-facing. A helical membrane pass occupies residues 475–495 (FGGSNNKILTSFAVFSFVAIW). Histidine 496 is a catalytic residue. The Lumenal portion of the chain corresponds to 496-502 (HDIQLRV). Residues 503 to 523 (LFWGWLTVLLLLGETYITNCF) traverse the membrane as a helical segment. Over 524 to 533 (SRYRFRSWYR) the chain is Cytoplasmic. Residues 534–554 (FVCGIGAAINICMMMIINVYG) form a helical membrane-spanning segment. The Lumenal portion of the chain corresponds to 555 to 575 (FCLGAEGTKLLLKGIFNNSHS). The chain crosses the membrane as a helical span at residues 576–596 (PEFLTAVMVSLFIAVQVMFEI). Topologically, residues 597–609 (REEEKRHGINLKC) are cytoplasmic.

The protein belongs to the membrane-bound acyltransferase family.

The protein localises to the endoplasmic reticulum membrane. Probable membrane-bound O-acyltransferase. Together with GUP1, has an influence on the chemical composition of the yeast extracellular matrix (yECM) in yeast multicellular aggregates, such as biofilms and colonies. In Saccharomyces cerevisiae (strain ATCC 204508 / S288c) (Baker's yeast), this protein is Membrane-bound O-acyltransferase GUP2 (GUP2).